We begin with the raw amino-acid sequence, 521 residues long: Non-specific phospholipase C5 (521 aa).

Residues 478–487 show a composition bias toward basic and acidic residues; sequence SKKARERGGD. A disordered region spans residues 478–521; sequence SKKARERGGDENDIVFCVDDDDDHNVVKPPPSQSEPSHATPWSN. Over residues 511–521 the composition is skewed to polar residues; sequence SEPSHATPWSN.

It belongs to the bacterial phospholipase C family. Specifically expressed in flowers.

It is found in the cytoplasm. The protein localises to the cytosol. It carries out the reaction a 1,2-diacyl-sn-glycero-3-phosphocholine + H2O = phosphocholine + a 1,2-diacyl-sn-glycerol + H(+). Functionally, non-specific phospholipase C (PLC) which assumes minor PLC activity during inorganic phosphate starvation. Can hydrolyze both phosphatidylcholine (PC) and phosphatidylethanolamine (PE). Required for normal accumulation of digalactosyldiacylglycerol (DGDG) during phosphate limitation and may contribute to the conversion of phospholipids to diacylglycerol, the substrate for galactolipid synthesis. This is Non-specific phospholipase C5 (NPC5) from Arabidopsis thaliana (Mouse-ear cress).